Here is a 313-residue protein sequence, read N- to C-terminus: Ras-related GTP-binding protein A (313 aa).

GTP contacts are provided by Ser16, Gly17, Gly19, Lys20, Thr21, Ser22, Thr36, Thr42, Gly65, and His127. Residues Gly17, Gly19, Lys20, Thr21, and Ser22 each coordinate GDP. GDP contacts are provided by His127 and Asp130. Lys142 is covalently cross-linked (Glycyl lysine isopeptide (Lys-Gly) (interchain with G-Cter in ubiquitin)). GDP contacts are provided by Leu148 and Ile164. Position 164 (Ile164) interacts with GTP. Residues Lys220, Lys230, and Lys244 each participate in a glycyl lysine isopeptide (Lys-Gly) (interchain with G-Cter in ubiquitin) cross-link. Ser309 is modified (phosphoserine).

It belongs to the GTR/RAG GTP-binding protein family. In terms of assembly, can occur as a homodimer or as a heterodimer with RRAGC or RRAGD in a sequence-independent manner; heterodimerization stabilizes proteins of the heterodimer. The GTP-bound form of RRAGA (in complex with the GDP-bound form of RRAGC or RRAGD) interacts with RPTOR, thereby promoting recruitment of mTORC1 to the lysosomes. The Rag heterodimer interacts with SLC38A9; the probable amino acid sensor. The Rag heterodimer interacts with the Ragulator complex. The GTP-bound form of RRAGA interacts with NOL8. Component of the lysosomal folliculin complex (LFC), composed of FLCN, FNIP1 (or FNIP2), RagA/RRAGA or RagB/RRAGB GDP-bound, RagC/RRAGC or RagD/RRAGD GTP-bound, and Ragulator. Interacts with SH3BP4; the interaction with this negative regulator is most probably direct, preferentially occurs with the inactive GDP-bound form of RRAGA and is negatively regulated by amino acids. Interacts (polyubiquitinated) with TSC2. Interacts with SESN1, SESN2 and SESN3. Interacts with PIP4P1. Interacts with GPR137B. Interacts with WDR83; this interaction regulates the spatiotemporal localization of mTORC1 to the lysosomal surface. Polybiquitinated via 'Lys-63'-linked polyubiquitination by RNF152 in response to amino acid starvation: polyubiquitination of the GDP-bound inactive form by RNF152 promotes RRAGA inactivation and interaction with the GATOR1 complex. This does not affect RRAGA degradation.

The protein resides in the cytoplasm. It localises to the nucleus. The protein localises to the lysosome membrane. The enzyme catalyses GTP + H2O = GDP + phosphate + H(+). Its activity is regulated as follows. The activation of GTP-binding proteins is generally mediated by a guanine exchange factor (GEF), while inactivation through hydrolysis of bound GTP is catalyzed by a GTPase activating protein (GAP). The Ragulator complex functions as a GEF and promotes the active GTP-bound form. The GATOR1 complex functions as a GAP and stimulates RRAGA GTPase activity to turn it into its inactive GDP-bound form, preventing mTORC1 recruitment and activation. Guanine nucleotide-binding protein that plays a crucial role in the cellular response to amino acid availability through regulation of the mTORC1 signaling cascade. Forms heterodimeric Rag complexes with RagC/RRAGC or RagD/RRAGD and cycles between an inactive GDP-bound and an active GTP-bound form: RagA/RRAGA is in its active form when GTP-bound RagA/RRAGA forms a complex with GDP-bound RagC/RRAGC (or RagD/RRAGD) and in an inactive form when GDP-bound RagA/RRAGA heterodimerizes with GTP-bound RagC/RRAGC (or RagD/RRAGD). In its GTP-bound active form, promotes the recruitment of mTORC1 to the lysosomes and its subsequent activation by the GTPase RHEB. Involved in the RCC1/Ran-GTPase pathway. May play a direct role in a TNF-alpha signaling pathway leading to induction of cell death. The sequence is that of Ras-related GTP-binding protein A from Bos taurus (Bovine).